The chain runs to 302 residues: tRNA pseudouridine synthase B (302 aa).

The active-site Nucleophile is aspartate 47.

It belongs to the pseudouridine synthase TruB family. Type 1 subfamily.

It catalyses the reaction uridine(55) in tRNA = pseudouridine(55) in tRNA. Functionally, responsible for synthesis of pseudouridine from uracil-55 in the psi GC loop of transfer RNAs. This Methylobacillus flagellatus (strain ATCC 51484 / DSM 6875 / VKM B-1610 / KT) protein is tRNA pseudouridine synthase B.